The chain runs to 236 residues: NAP1-binding protein 2 (236 aa).

Ser-102 is subject to Phosphoserine. The region spanning 110-171 (IVNQRAVALY…PEEFVSYIQP (62 aa)) is the SH3 domain. Phosphoserine occurs at positions 196 and 235.

In terms of assembly, interacts with PBS2 and PTC1.

The protein resides in the cytoplasm. Its function is as follows. Negatively regulates the high-osmolarity glycerol (HOG) pathway through its negative regulation of the HOG1 kinase activity. Mediates the binding between the PTC1 phosphatase and the PBS2 MAP/ERK kinase (MEK). With PTC1, regulates endoplasmic reticulum inheritance through the cell wall integrity (CWI) MAPK pathway by modulating the MAPK, SLT2. The sequence is that of NAP1-binding protein 2 (NBP2) from Saccharomyces cerevisiae (strain ATCC 204508 / S288c) (Baker's yeast).